Reading from the N-terminus, the 565-residue chain is Urocanate hydratase (565 aa).

NAD(+)-binding positions include 58–59, Q136, 182–184, E202, R207, 245–246, 266–270, 276–277, and Y325; these read GG, GMG, NA, QTSAH, and YL. C413 is a catalytic residue. NAD(+) is bound at residue G495.

This sequence belongs to the urocanase family. It depends on NAD(+) as a cofactor.

It is found in the cytoplasm. The enzyme catalyses 4-imidazolone-5-propanoate = trans-urocanate + H2O. It functions in the pathway amino-acid degradation; L-histidine degradation into L-glutamate; N-formimidoyl-L-glutamate from L-histidine: step 2/3. Its function is as follows. Catalyzes the conversion of urocanate to 4-imidazolone-5-propionate. The chain is Urocanate hydratase from Vibrio cholerae serotype O1 (strain ATCC 39541 / Classical Ogawa 395 / O395).